Here is a 339-residue protein sequence, read N- to C-terminus: Dihydroorotase (339 aa).

Residues H12 and H14 each coordinate Zn(2+). Substrate contacts are provided by residues 14–16 (HVR) and N40. Residues K94, H133, H167, and D239 each contribute to the Zn(2+) site. Residue K94 is modified to N6-carboxylysine. Residue H133 participates in substrate binding. The active site involves D239. 2 residues coordinate substrate: H243 and A255.

This sequence belongs to the metallo-dependent hydrolases superfamily. DHOase family. Class II DHOase subfamily. In terms of assembly, homodimer. Requires Zn(2+) as cofactor.

It carries out the reaction (S)-dihydroorotate + H2O = N-carbamoyl-L-aspartate + H(+). It participates in pyrimidine metabolism; UMP biosynthesis via de novo pathway; (S)-dihydroorotate from bicarbonate: step 3/3. Functionally, catalyzes the reversible cyclization of carbamoyl aspartate to dihydroorotate. This is Dihydroorotase from Helicobacter pylori (strain HPAG1).